A 1659-amino-acid chain; its full sequence is Daxx-like protein (1659 aa).

2 disordered regions span residues 1 to 25 (MSAS…RRRL) and 265 to 336 (QLQQ…VRSL). Residues 438-469 (LGQLQQEQQKILGQLQQQKQQQQQQQKKILGQ) are a coiled coil. Low complexity-rich tracts occupy residues 506-520 (SVGQ…QSQQ), 528-542 (KQQP…VGQF), and 600-625 (GQLQ…QQQQ). 7 disordered regions span residues 506–542 (SVGQ…VGQF), 600–645 (GQLQ…TLAG), 658–713 (SAGQ…MPQK), 872–894 (TLPF…HVQG), 924–952 (LPPT…VQQQ), 1023–1060 (VESP…QSRA), and 1536–1555 (FKIA…EDDD). Residues 626–635 (KISAGQLQEH) show a composition bias toward polar residues. Composition is skewed to low complexity over residues 636–645 (SQQQQKTLAG) and 658–698 (SAGQ…QPQQ). 2 stretches are compositionally biased toward polar residues: residues 699-711 (RTSA…QQMP) and 885-894 (APMTSTHVQG). The interval 870 to 1659 (ARTLPFRSSQ…DQIIISDEES (790 aa)) is necessary for interaction with His3.3A and His3.3B. Residues 924–937 (LPPTTSITPQLTPT) show a composition bias toward low complexity. Over residues 1541 to 1555 (DGDDSEEESDSEDDD) the composition is skewed to acidic residues.

Interacts with p53 (via C-terminus). Interacts (via C-terminus) with His3.3A and His3.3B. Interacts with asf1. In terms of tissue distribution, ubiquitously expressed with higher levels in the head (at protein level). Expressed in the germ line, with prominent expression in primary spermatocytes and meiotic spermatocytes (at protein level). In ovaries, expressed in nurse cells and in the germinal vesicle of the ovarian follicle at stage 10 (at protein level).

The protein localises to the cytoplasm. Its subcellular location is the cytosol. It is found in the nucleus. The protein resides in the chromosome. Transcription regulator. Acts as a histone chaperone that facilitates deposition of histone H3.3. Has a role in chromatin remodeling together with asf1 and XNP. Has role in the transcriptional apoptotic response to oxidative and UV stress. This Drosophila melanogaster (Fruit fly) protein is Daxx-like protein.